A 327-amino-acid chain; its full sequence is Malate dehydrogenase (327 aa).

Residue 11 to 17 (GAAGQIG) participates in NAD(+) binding. Arg92 and Arg98 together coordinate substrate. NAD(+) contacts are provided by residues Asn105, Gln112, and 129–131 (VGN). Positions 131 and 162 each coordinate substrate. His187 functions as the Proton acceptor in the catalytic mechanism.

It belongs to the LDH/MDH superfamily. MDH type 2 family.

It carries out the reaction (S)-malate + NAD(+) = oxaloacetate + NADH + H(+). Its function is as follows. Catalyzes the reversible oxidation of malate to oxaloacetate. The chain is Malate dehydrogenase from Thermus thermophilus (strain ATCC BAA-163 / DSM 7039 / HB27).